The following is an 842-amino-acid chain: Amyloid-beta A4 precursor protein-binding family A member 1 (842 aa).

Disordered stretches follow at residues 1 to 121 (MNHL…DESA), 238 to 349 (RLHH…EKRD), and 366 to 439 (KTRT…KESR). Ser-82 is modified (phosphoserine). Basic and acidic residues-rich tracts occupy residues 106-115 (DGYEAERAQD) and 240-258 (HHYDERSDGESDSPEKEAE). A phosphoserine mark is found at Ser-246, Ser-250, Ser-252, Ser-267, Ser-284, and Ser-289. Thr-309 bears the Phosphothreonine mark. Ser-317 and Ser-372 each carry phosphoserine. Thr-375 carries the post-translational modification Phosphothreonine. Residues 392–403 (PTRDCDDQRPVD) show a composition bias toward basic and acidic residues. A compositionally biased stretch (low complexity) spans 404–421 (GDSPSPGSSSPLGAESSS). Phosphoserine occurs at positions 406, 408, 413, and 573. The PID domain maps to 460–648 (LIDGIIFAAN…LLNTQDMYND (189 aa)). An autoinhibitory helix linker region spans residues 631–648 (LSQKEYSDLLNTQDMYND). PDZ domains follow at residues 661–746 (DVFI…NIVR) and 752–828 (TVLI…MPAA).

In terms of assembly, part of a multimeric complex containing STXBP1 and STX1A. Interacts with STXBP1. Component of the brain-specific heterotrimeric complex (LIN-10-LIN-2-LIN-7 complex) composed of at least APBA1, CASK, and LIN7, which associates with the motor protein KIF17 to transport vesicles along microtubules. Within the complex, interacts (via PDZ domain) with the motor protein KIF17; the interaction is direct and is required for association of KIF17 with the cargo that is to be transported. Binds to the cytoplasmic domain of amyloid protein (APP). Interacts (via PDZ 1 and 2 domains) with FSPB. Isoform 3 interacts (via its truncated PID domain) with active, GTP-bound RAB6A. Also interacts with GTP-bound RAB6B. In terms of tissue distribution, isoform 3 is expressed in brain.

It localises to the cytoplasm. The protein resides in the perinuclear region. It is found in the nucleus. Its subcellular location is the golgi apparatus. In terms of biological role, putative function in synaptic vesicle exocytosis by binding to Munc18-1, an essential component of the synaptic vesicle exocytotic machinery. May modulate processing of the amyloid-beta precursor protein (APP) and hence formation of AAP-beta. Component of the LIN-10-LIN-2-LIN-7 complex, which associates with the motor protein KIF17 to transport vesicles containing N-methyl-D-aspartate (NMDA) receptor subunit NR2B along microtubules. The chain is Amyloid-beta A4 precursor protein-binding family A member 1 from Mus musculus (Mouse).